Consider the following 336-residue polypeptide: NADH-quinone oxidoreductase subunit H (336 aa).

8 helical membrane-spanning segments follow: residues 4 to 24 (YILWTSLYVLLIVIPLILVVA), 75 to 95 (YLFFIAPILAFAPAYAAWAVI), 108 to 128 (LGLLYILAMTSFSIYGIVIAG), 154 to 174 (MGFAIVGVVIAAGSMGITGII), 181 to 201 (IWHWYFISLFPLFIVYFIAGI), 233 to 253 (LFFLAEYANMILISILTSIMF), 272 to 292 (FVPGVVWLFAKTGIFMFMFLW), and 308 to 328 (LGWKIFIPLTFVWVVIVACMV).

It belongs to the complex I subunit 1 family. NDH-1 is composed of 14 different subunits. Subunits NuoA, H, J, K, L, M, N constitute the membrane sector of the complex.

Its subcellular location is the cell inner membrane. The enzyme catalyses a quinone + NADH + 5 H(+)(in) = a quinol + NAD(+) + 4 H(+)(out). NDH-1 shuttles electrons from NADH, via FMN and iron-sulfur (Fe-S) centers, to quinones in the respiratory chain. The immediate electron acceptor for the enzyme in this species is believed to be ubiquinone. Couples the redox reaction to proton translocation (for every two electrons transferred, four hydrogen ions are translocated across the cytoplasmic membrane), and thus conserves the redox energy in a proton gradient. This subunit may bind ubiquinone. This is NADH-quinone oxidoreductase subunit H from Francisella tularensis subsp. mediasiatica (strain FSC147).